The chain runs to 83 residues: Small ribosomal subunit protein bS16 (83 aa).

The protein belongs to the bacterial ribosomal protein bS16 family.

The protein is Small ribosomal subunit protein bS16 of Shewanella frigidimarina (strain NCIMB 400).